The sequence spans 180 residues: Putative manganese efflux pump MntP (180 aa).

Transmembrane regions (helical) follow at residues 6–26 (VLLLAGALGTDAFSLCLGLGL), 33–53 (MAWMLVGLIVALHVVLPVAGW), 63–83 (VGRWAAYLGAAILFYLGVKMV), 101–121 (GFLGLTVLAGSVSMDALSVGF), and 130–150 (LLLTAGVIGLVAGLMSAAAFV).

This sequence belongs to the MntP (TC 9.B.29) family.

The protein resides in the cell membrane. Its function is as follows. Probably functions as a manganese efflux pump. This chain is Putative manganese efflux pump MntP, found in Desulforudis audaxviator (strain MP104C).